Consider the following 150-residue polypeptide: D-aminoacyl-tRNA deacylase (150 aa).

Positions 138–139 match the Gly-cisPro motif, important for rejection of L-amino acids motif; that stretch reads GP.

The protein belongs to the DTD family. Homodimer.

The protein localises to the cytoplasm. The catalysed reaction is glycyl-tRNA(Ala) + H2O = tRNA(Ala) + glycine + H(+). It catalyses the reaction a D-aminoacyl-tRNA + H2O = a tRNA + a D-alpha-amino acid + H(+). Its function is as follows. An aminoacyl-tRNA editing enzyme that deacylates mischarged D-aminoacyl-tRNAs. Also deacylates mischarged glycyl-tRNA(Ala), protecting cells against glycine mischarging by AlaRS. Acts via tRNA-based rather than protein-based catalysis; rejects L-amino acids rather than detecting D-amino acids in the active site. By recycling D-aminoacyl-tRNA to D-amino acids and free tRNA molecules, this enzyme counteracts the toxicity associated with the formation of D-aminoacyl-tRNA entities in vivo and helps enforce protein L-homochirality. The polypeptide is D-aminoacyl-tRNA deacylase (Bacteroides thetaiotaomicron (strain ATCC 29148 / DSM 2079 / JCM 5827 / CCUG 10774 / NCTC 10582 / VPI-5482 / E50)).